A 254-amino-acid polypeptide reads, in one-letter code: Adenosine 5'-phosphosulfate reductase (254 aa).

4 residues coordinate [4Fe-4S] cluster: Cys140, Cys141, Cys223, and Cys226. Cys249 (nucleophile; cysteine thiosulfonate intermediate) is an active-site residue.

Belongs to the PAPS reductase family. CysH subfamily. [4Fe-4S] cluster is required as a cofactor.

The protein localises to the cytoplasm. The catalysed reaction is [thioredoxin]-disulfide + sulfite + AMP + 2 H(+) = adenosine 5'-phosphosulfate + [thioredoxin]-dithiol. Its pathway is sulfur metabolism; hydrogen sulfide biosynthesis; sulfite from sulfate. Functionally, catalyzes the formation of sulfite from adenosine 5'-phosphosulfate (APS) using thioredoxin as an electron donor. The polypeptide is Adenosine 5'-phosphosulfate reductase (Mycobacterium bovis (strain ATCC BAA-935 / AF2122/97)).